We begin with the raw amino-acid sequence, 712 residues long: Interleukin-1 receptor-associated kinase 1 (712 aa).

One can recognise a Death domain in the interval 27–106 (MCRFYKVMDA…DIITAWHPPA (80 aa)). The residue at position 66 (Thr-66) is a Phosphothreonine; by PKC/PRKCI. Residues 105–187 (PAPLPSPGTT…STKPGPESSV (83 aa)) form a disordered region. A proST region region spans residues 110-211 (SPGTTAPRPS…LCEISRGTHN (102 aa)). Positions 115–133 (APRPSSIPAPAEAEAWSPR) are enriched in low complexity. At Ser-131 the chain carries Phosphoserine. Lys-134 participates in a covalent cross-link: Glycyl lysine isopeptide (Lys-Gly) (interchain with G-Cter in ubiquitin). Polar residues predominate over residues 137 to 154 (SSASTFLSPAFPGSQTHS). Lys-180 participates in a covalent cross-link: Glycyl lysine isopeptide (Lys-Gly) (interchain with G-Cter in ubiquitin). At Thr-209 the chain carries Phosphothreonine; by IRAK4. The 310-residue stretch at 212 to 521 (FSEELKIGEG…TQVYERLEKL (310 aa)) folds into the Protein kinase domain. Residues 218–226 (IGEGGFGCV) and Lys-239 contribute to the ATP site. The active-site Proton acceptor is Asp-340. Residues 342–345 (KSSN) and Asp-358 contribute to the ATP site. Ser-371 and Ser-375 each carry phosphoserine. A Phosphothreonine modification is found at Thr-387. Disordered regions lie at residues 532–591 (SEAA…SDES), 613–660 (APLR…PPQI), and 690–712 (SSLPGLGLEQDRQGPEESDEFQS). Residues 543–553 (QENSYVSSTGR) show a composition bias toward polar residues. Ser-556 carries the phosphoserine modification. Composition is skewed to low complexity over residues 562–575 (QPLAAPSGASAQAA) and 643–658 (EGLALGSSASSSSEPP).

Belongs to the protein kinase superfamily. TKL Ser/Thr protein kinase family. Pelle subfamily. As to quaternary structure, homodimer. Forms a complex with TRAF6, PELI1, IRAK4 and MYD88. Direct binding of SMAD6 to PELI1 prevents complex formation and hence negatively regulates IL1R-TLR signaling and eventually NF-kappa-B-mediated gene expression. The TRAF6-PELI1-IRAK4-MYD88 complex recruits MAP3K7/TAK1, TAB1 and TAB2 to mediate NF-kappa-B activation. Interaction with MYD88 recruits IRAK1 to the stimulated receptor complex. Interacts with TOLLIP; this interaction occurs in the cytosol prior to receptor activation. Interacts with IL1RL1. Interacts with PELI1 and TRAF6. Interacts (when polyubiquitinated) with IKBKG/NEMO. Interacts with RSAD2/viperin. Interacts with IRAK1BP1. Interacts with PELI2. Interacts with ZC3H12A; this interaction increases the interaction between ZC3H12A and IKBKB/IKKB. Interacts with IRAK4. Interacts with PELI3. Interacts with INAVA; the interaction takes place upon PRR stimulation. Interacts (via C-terminus) with NFATC4 (via N-terminus). (Microbial infection) Interacts with mumps virus protein SH; this interaction inhibits downstream NF-kappa-B pathway activation. In terms of assembly, (Microbial infection) Interacts with alphaviruses SINV, CHIKV, RRV, VEEV and EEEV capsid proteins; the interactions lead to inhibition of IRAK1-dependent signaling. Mg(2+) is required as a cofactor. Following recruitment on the activated receptor complex, phosphorylated on Thr-209, probably by IRAK4, resulting in a conformational change of the kinase domain, allowing further phosphorylations to take place. Thr-387 phosphorylation in the activation loop is required to achieve full enzymatic activity. In terms of processing, polyubiquitinated by TRAF6 after cell stimulation with IL-1-beta by PELI1, PELI2 and PELI3. Polyubiquitination occurs with polyubiquitin chains linked through 'Lys-63'. Ubiquitination promotes interaction with NEMO/IKBKG. Also sumoylated; leading to nuclear translocation. As to expression, isoform 1 and isoform 2 are ubiquitously expressed in all tissues examined, with isoform 1 being more strongly expressed than isoform 2.

It localises to the cytoplasm. The protein localises to the nucleus. Its subcellular location is the lipid droplet. It carries out the reaction L-seryl-[protein] + ATP = O-phospho-L-seryl-[protein] + ADP + H(+). The catalysed reaction is L-threonyl-[protein] + ATP = O-phospho-L-threonyl-[protein] + ADP + H(+). In terms of biological role, serine/threonine-protein kinase that plays a critical role in initiating innate immune response against foreign pathogens. Involved in Toll-like receptor (TLR) and IL-1R signaling pathways. Is rapidly recruited by MYD88 to the receptor-signaling complex upon TLR activation. Association with MYD88 leads to IRAK1 phosphorylation by IRAK4 and subsequent autophosphorylation and kinase activation. Phosphorylates E3 ubiquitin ligases Pellino proteins (PELI1, PELI2 and PELI3) to promote pellino-mediated polyubiquitination of IRAK1. Then, the ubiquitin-binding domain of IKBKG/NEMO binds to polyubiquitinated IRAK1 bringing together the IRAK1-MAP3K7/TAK1-TRAF6 complex and the NEMO-IKKA-IKKB complex. In turn, MAP3K7/TAK1 activates IKKs (CHUK/IKKA and IKBKB/IKKB) leading to NF-kappa-B nuclear translocation and activation. Alternatively, phosphorylates TIRAP to promote its ubiquitination and subsequent degradation. Phosphorylates the interferon regulatory factor 7 (IRF7) to induce its activation and translocation to the nucleus, resulting in transcriptional activation of type I IFN genes, which drive the cell in an antiviral state. When sumoylated, translocates to the nucleus and phosphorylates STAT3. The polypeptide is Interleukin-1 receptor-associated kinase 1 (Homo sapiens (Human)).